A 187-amino-acid chain; its full sequence is Peptidyl-tRNA hydrolase (187 aa).

Tyr18 provides a ligand contact to tRNA. His23 acts as the Proton acceptor in catalysis. TRNA contacts are provided by Phe65, Asn67, and Asn113.

This sequence belongs to the PTH family. As to quaternary structure, monomer.

Its subcellular location is the cytoplasm. The enzyme catalyses an N-acyl-L-alpha-aminoacyl-tRNA + H2O = an N-acyl-L-amino acid + a tRNA + H(+). Functionally, hydrolyzes ribosome-free peptidyl-tRNAs (with 1 or more amino acids incorporated), which drop off the ribosome during protein synthesis, or as a result of ribosome stalling. In terms of biological role, catalyzes the release of premature peptidyl moieties from peptidyl-tRNA molecules trapped in stalled 50S ribosomal subunits, and thus maintains levels of free tRNAs and 50S ribosomes. In Coxiella burnetii (strain CbuK_Q154) (Coxiella burnetii (strain Q154)), this protein is Peptidyl-tRNA hydrolase.